We begin with the raw amino-acid sequence, 296 residues long: uncharacterized protein (296 aa).

Residues 129 to 170 are a coiled coil; the sequence is VKELKDLIRTVADEHMKMKREHEAAMKELTLLINNQKQQQQQ. The segment at 165-187 is disordered; the sequence is KQQQQQPVPMPRNSTATRPKNLA.

This is an uncharacterized protein from Ostreid herpesvirus 1 (isolate France) (OsHV-1).